Reading from the N-terminus, the 220-residue chain is Large ribosomal subunit protein eL15 (220 aa).

Over residues 197–207 (KKRHEASRGAR) the composition is skewed to basic and acidic residues. Positions 197 to 220 (KKRHEASRGARDPWQIAEKLKEEK) are disordered.

It belongs to the eukaryotic ribosomal protein eL15 family.

The protein is Large ribosomal subunit protein eL15 of Desulfurococcus amylolyticus (strain DSM 18924 / JCM 16383 / VKM B-2413 / 1221n) (Desulfurococcus kamchatkensis).